A 427-amino-acid chain; its full sequence is Peptidase B (427 aa).

Mn(2+) is bound by residues Lys-195 and Asp-200. Residue Lys-207 is part of the active site. Mn(2+)-binding residues include Asp-218, Asp-277, and Glu-279. The active site involves Arg-281.

The protein belongs to the peptidase M17 family. As to quaternary structure, homohexamer. Mn(2+) is required as a cofactor.

It localises to the cytoplasm. The enzyme catalyses Release of an N-terminal amino acid, Xaa, from a peptide or arylamide. Xaa is preferably Glu or Asp but may be other amino acids, including Leu, Met, His, Cys and Gln.. In terms of biological role, probably plays an important role in intracellular peptide degradation. The sequence is that of Peptidase B from Escherichia coli (strain SMS-3-5 / SECEC).